We begin with the raw amino-acid sequence, 908 residues long: MNARIDIGNEAFSAAELATAESRASATPMMEQYIEIKANNPGSLLFYRMGDFYELFFEDALEASRALGITLTKRGQHMGQDIPMCGVPVHAADDYLQKLISLGFRVAVCEQIEDPAQAKKRGAKSVVKRDVIRLVTPGTITEEKLLSPSESNYLMALARIRGGAEPQLALAWIDISTGVFRLAETESSRLLADILRIDPRELILPDTIFHDAELKPVFDVLGRTAVPQPSVLFDSASAEGRIARYFGVSTLDGFGSFSRAELAAAAAAVAYVEKTQIAERPPLGKPERESAASTLFIDPATRANLELARTLSGDRNGSLLKAIDRTVTGGGARLLAERLMSPLTDPARINARLDSIGFLIEEPSLCGKLRDTLKHVPDMPRALSRLALDRGGPRDLWAIRQGLQAAGGLADLLASAMLPEELDQALSGLQALPAGLETLLAETLADELPLLKRDGGFLRDGASAELDEVRALRDQSRRVIAGLQLQYAEETGIRSLKIKHNNILGYFIEVTAGNAAPMTETSEAKSRFIHRQTMASAMRFTTTELADLESRIANAADRALTIELEAFDRMTAAVVAQAESIKSGARALAVIDVAAGLALLAEEQAYCRPQVDGSKMFAIEGGRHPVVEQALRRQAGGPFVANNCDLSPKTGDKDGAIWLLTGPNMGGKSTFLRQNALIAIMAQMGSFVPATSAHIGIVDRLFSRVGASDDLARGRSTFMVEMVETAAILNQASDRSLVILDEIGRGTATFDGLSIAWAAVEHLHEANRCRGLFATHFHELTVLSEKLGRLSNATMRVKEWDGDVIFLHEVGPGAADRSYGIQVARLAGLPASVVARARDVLTRLEDADRKNPASQLIDDLPLFQVAVRREDAARGPSKVEEALRAMSLDDMTPREAMDALYDLKKKLK.

Position 662-669 (662-669) interacts with ATP; that stretch reads GPNMGGKS.

The protein belongs to the DNA mismatch repair MutS family.

Its function is as follows. This protein is involved in the repair of mismatches in DNA. It is possible that it carries out the mismatch recognition step. This protein has a weak ATPase activity. This is DNA mismatch repair protein MutS from Rhizobium etli (strain ATCC 51251 / DSM 11541 / JCM 21823 / NBRC 15573 / CFN 42).